The chain runs to 131 residues: Small ribosomal subunit protein uS11 (131 aa).

This sequence belongs to the universal ribosomal protein uS11 family. In terms of assembly, part of the 30S ribosomal subunit. Interacts with proteins S7 and S18. Binds to IF-3.

Its function is as follows. Located on the platform of the 30S subunit, it bridges several disparate RNA helices of the 16S rRNA. Forms part of the Shine-Dalgarno cleft in the 70S ribosome. In Bacillus licheniformis (strain ATCC 14580 / DSM 13 / JCM 2505 / CCUG 7422 / NBRC 12200 / NCIMB 9375 / NCTC 10341 / NRRL NRS-1264 / Gibson 46), this protein is Small ribosomal subunit protein uS11.